A 273-amino-acid chain; its full sequence is Putative pyruvate, phosphate dikinase regulatory protein (273 aa).

Residue 151–158 (GVSRTSKT) coordinates ADP.

Belongs to the pyruvate, phosphate/water dikinase regulatory protein family. PDRP subfamily.

The enzyme catalyses N(tele)-phospho-L-histidyl/L-threonyl-[pyruvate, phosphate dikinase] + ADP = N(tele)-phospho-L-histidyl/O-phospho-L-threonyl-[pyruvate, phosphate dikinase] + AMP + H(+). The catalysed reaction is N(tele)-phospho-L-histidyl/O-phospho-L-threonyl-[pyruvate, phosphate dikinase] + phosphate + H(+) = N(tele)-phospho-L-histidyl/L-threonyl-[pyruvate, phosphate dikinase] + diphosphate. Bifunctional serine/threonine kinase and phosphorylase involved in the regulation of the pyruvate, phosphate dikinase (PPDK) by catalyzing its phosphorylation/dephosphorylation. This chain is Putative pyruvate, phosphate dikinase regulatory protein, found in Desulfitobacterium hafniense (strain Y51).